The chain runs to 38 residues: MTQSNPNEQSVELNRTSLYWGLLLIFVLAVLFSNYFFN.

Residues 17-37 form a helical membrane-spanning segment; that stretch reads SLYWGLLLIFVLAVLFSNYFF.

Belongs to the PsbL family. In terms of assembly, PSII is composed of 1 copy each of membrane proteins PsbA, PsbB, PsbC, PsbD, PsbE, PsbF, PsbH, PsbI, PsbJ, PsbK, PsbL, PsbM, PsbT, PsbX, PsbY, PsbZ, Psb30/Ycf12, at least 3 peripheral proteins of the oxygen-evolving complex and a large number of cofactors. It forms dimeric complexes.

The protein resides in the plastid. It localises to the chloroplast thylakoid membrane. Its function is as follows. One of the components of the core complex of photosystem II (PSII). PSII is a light-driven water:plastoquinone oxidoreductase that uses light energy to abstract electrons from H(2)O, generating O(2) and a proton gradient subsequently used for ATP formation. It consists of a core antenna complex that captures photons, and an electron transfer chain that converts photonic excitation into a charge separation. This subunit is found at the monomer-monomer interface and is required for correct PSII assembly and/or dimerization. This is Photosystem II reaction center protein L from Antirrhinum majus (Garden snapdragon).